The primary structure comprises 431 residues: Histidinol dehydrogenase (431 aa).

Residues Tyr-131, Gln-193, and Asn-216 each contribute to the NAD(+) site. Ser-239, Gln-261, and His-264 together coordinate substrate. Residues Gln-261 and His-264 each coordinate Zn(2+). Catalysis depends on proton acceptor residues Glu-329 and His-330. His-330, Asp-363, Glu-417, and His-422 together coordinate substrate. Asp-363 provides a ligand contact to Zn(2+). His-422 contacts Zn(2+).

The protein belongs to the histidinol dehydrogenase family. The cofactor is Zn(2+).

It carries out the reaction L-histidinol + 2 NAD(+) + H2O = L-histidine + 2 NADH + 3 H(+). The protein operates within amino-acid biosynthesis; L-histidine biosynthesis; L-histidine from 5-phospho-alpha-D-ribose 1-diphosphate: step 9/9. Catalyzes the sequential NAD-dependent oxidations of L-histidinol to L-histidinaldehyde and then to L-histidine. The polypeptide is Histidinol dehydrogenase (Clostridium acetobutylicum (strain ATCC 824 / DSM 792 / JCM 1419 / IAM 19013 / LMG 5710 / NBRC 13948 / NRRL B-527 / VKM B-1787 / 2291 / W)).